Reading from the N-terminus, the 202-residue chain is FMN-dependent NADH:quinone oxidoreductase (202 aa).

Residues serine 12 and 21–23 contribute to the FMN site; that span reads SFS.

The protein belongs to the azoreductase type 1 family. As to quaternary structure, homodimer. Requires FMN as cofactor.

It catalyses the reaction 2 a quinone + NADH + H(+) = 2 a 1,4-benzosemiquinone + NAD(+). It carries out the reaction N,N-dimethyl-1,4-phenylenediamine + anthranilate + 2 NAD(+) = 2-(4-dimethylaminophenyl)diazenylbenzoate + 2 NADH + 2 H(+). Its function is as follows. Quinone reductase that provides resistance to thiol-specific stress caused by electrophilic quinones. In terms of biological role, also exhibits azoreductase activity. Catalyzes the reductive cleavage of the azo bond in aromatic azo compounds to the corresponding amines. The protein is FMN-dependent NADH:quinone oxidoreductase of Mycoplasma mobile (strain ATCC 43663 / 163K / NCTC 11711) (Mesomycoplasma mobile).